The primary structure comprises 60 residues: Large ribosomal subunit protein uL30 (60 aa).

Belongs to the universal ribosomal protein uL30 family. In terms of assembly, part of the 50S ribosomal subunit.

This Shewanella baltica (strain OS223) protein is Large ribosomal subunit protein uL30.